The chain runs to 184 residues: Photosystem I assembly protein Ycf4 (184 aa).

2 helical membrane-spanning segments follow: residues Phe22–Ser42 and Ile57–Ser77.

It belongs to the Ycf4 family.

It localises to the plastid. The protein resides in the chloroplast thylakoid membrane. In terms of biological role, seems to be required for the assembly of the photosystem I complex. The polypeptide is Photosystem I assembly protein Ycf4 (Panax ginseng (Korean ginseng)).